The sequence spans 333 residues: GDP-fucose transporter 1 (333 aa).

8 consecutive transmembrane segments (helical) span residues Ser13–Leu33, Ala45–Gly65, Leu95–Phe115, Thr139–Asn159, Met169–Ile189, Ala211–Ser231, Tyr239–Leu259, and Thr293–Val313.

It belongs to the TPT transporter family. SLC35C subfamily.

The protein resides in the golgi apparatus membrane. The enzyme catalyses GMP(out) + GDP-beta-L-fucose(in) = GMP(in) + GDP-beta-L-fucose(out). In terms of biological role, antiporter specific for GDP-l-fucose and depending on the concomitant reverse transport of GMP. Involved in GDP-fucose import from the cytoplasm into the Golgi lumen. This chain is GDP-fucose transporter 1 (slc35c1), found in Monosiga brevicollis (Choanoflagellate).